We begin with the raw amino-acid sequence, 216 residues long: Soluble inorganic pyrophosphatase 4 (216 aa).

Phosphoserine is present on serine 18. Substrate is bound by residues lysine 66 and arginine 80. Tyrosine 88 acts as the Proton donor in catalysis. Substrate is bound at residue tyrosine 92. Residues aspartate 102, aspartate 107, and aspartate 139 each contribute to the Mg(2+) site. Tyrosine 176 is a substrate binding site.

It belongs to the PPase family. In terms of assembly, monomer. The cofactor is Mg(2+). In terms of tissue distribution, ubiquitous, excepted in pollen. Very low expression in cork, xylem and hypocotyls.

It is found in the cytoplasm. The catalysed reaction is diphosphate + H2O = 2 phosphate + H(+). Inhibited by Zn(2+), Ca(2+), Ba(2+), Fe(2+), Co(2+), Cu(2+), Eu(2+), Eu(3+) and Mn(2+). Catalyzes the irreversible hydrolysis of pyrophosphate (PPi) to phosphate. The MgPPi(2-) complex binds to the enzyme only after a free Mg(2+) ion has bound. No activity with glycerol-3-phosphate, glucose-6-phosphate, p-nitrophenylphosphate, ADP, NADP(+), NAD(+),NADH, NADPH or phosphoribosyl pyrophosphate as substrates. In Arabidopsis thaliana (Mouse-ear cress), this protein is Soluble inorganic pyrophosphatase 4.